Reading from the N-terminus, the 226-residue chain is MRTLILSLLLLVDLTTQAATLGFPALPGGGLVYKQVQSIRERRFADLVEQKTDFSCGAAALATILEKAYGAPLDEQAVIQGMLAHADPEIVRTQGFSMLDMKRYVESMGMRARGYRIEAAQLEQLKIPAIVLMEIRGYKHFVVLQRTQGEYVYVGDPALGHKRYALTEFAKGWNGIVFAVIGQGYDRGNPLLTPPEPLTARNRLDRFKPVRDAELMEFGFIQSDFF.

The first 18 residues, 1–18 (MRTLILSLLLLVDLTTQA), serve as a signal peptide directing secretion. One can recognise a Peptidase C39 domain in the interval 50–180 (QKTDFSCGAA…KGWNGIVFAV (131 aa)). Cys-56 is a catalytic residue.

It belongs to the FapD family.

It localises to the periplasm. Functionally, probable protease that might be involved in processing fibril precursors. Upon overexpression of the endogenous six-gene locus (fapA-fapF), cells form large clumps during liquid growth, make large amounts of biofilm and produce amyloid fibrils. The protein is Probable functional amyloid protease FapD of Pseudomonas aeruginosa (strain ATCC 15692 / DSM 22644 / CIP 104116 / JCM 14847 / LMG 12228 / 1C / PRS 101 / PAO1).